We begin with the raw amino-acid sequence, 559 residues long: Heterochromatin protein 1-binding protein 3 (559 aa).

The disordered stretch occupies residues 1-132 (MATDLSEAEP…SKEKEKKVKK (132 aa)). 2 stretches are compositionally biased toward basic and acidic residues: residues 51 to 68 (TPPKSKPAEGGEEVKADA) and 96 to 128 (EQPKEPENEEKGETKSSVETKKDDKDQSKEKEK). 3 H15 domains span residues 158 to 233 (SRPK…VVVS), 256 to 331 (QQVK…QLKK), and 339 to 414 (GGTL…QLCF). The PxVxL motif signature appears at 256–260 (QQVKL). Positions 421-559 (DVLYPEKQQD…AMRKSLRAKK (139 aa)) are disordered. Residues 429-459 (QDEDSEESQEEEEEESEEEEESEEEESEEEE) are compositionally biased toward acidic residues. Positions 463 to 515 (KKRMQKRPPPKSRSRAPPMKRRESKPKPRKTPAAHQGKAKPPPKVKTPVKKAK) are enriched in basic residues. A compositionally biased stretch (low complexity) spans 516-533 (PAAPAIKKPSGGSSSKKP). Basic residues predominate over residues 549–559 (SAMRKSLRAKK).

The protein localises to the nucleus. The protein resides in the chromosome. In terms of biological role, component of heterochromatin that maintains heterochromatin integrity during G1/S progression and regulates the duration of G1 phase to critically influence cell proliferative capacity. This Gallus gallus (Chicken) protein is Heterochromatin protein 1-binding protein 3 (HP1BP3).